Consider the following 277-residue polypeptide: Large ribosomal subunit protein uL2 (277 aa).

The segment at 215-277 (GIRPTVRGSV…KLIVKRRNDK (63 aa)) is disordered. Positions 264 to 277 (KYSDKLIVKRRNDK) are enriched in basic and acidic residues.

The protein belongs to the universal ribosomal protein uL2 family. In terms of assembly, part of the 50S ribosomal subunit. Forms a bridge to the 30S subunit in the 70S ribosome.

Functionally, one of the primary rRNA binding proteins. Required for association of the 30S and 50S subunits to form the 70S ribosome, for tRNA binding and peptide bond formation. It has been suggested to have peptidyltransferase activity; this is somewhat controversial. Makes several contacts with the 16S rRNA in the 70S ribosome. This chain is Large ribosomal subunit protein uL2, found in Clostridium acetobutylicum (strain ATCC 824 / DSM 792 / JCM 1419 / IAM 19013 / LMG 5710 / NBRC 13948 / NRRL B-527 / VKM B-1787 / 2291 / W).